Consider the following 477-residue polypeptide: Stromelysin-1 (477 aa).

The N-terminal stretch at 1-17 is a signal peptide; that stretch reads MKSLPILLLLCVAVCSA. Positions 18-99 are cleaved as a propeptide — activation peptide; sequence YPLDGAARGE…PRCGVPDVGH (82 aa). Residues 90 to 97 carry the Cysteine switch motif; that stretch reads PRCGVPDV. C92 is a binding site for Zn(2+). Ca(2+) contacts are provided by D124 and D158. Positions 168 and 170 each coordinate Zn(2+). Ca(2+) is bound by residues D175, G176, G178, and V180. H183 contributes to the Zn(2+) binding site. Ca(2+)-binding residues include G190, N192, and D194. H196 is a binding site for Zn(2+). Ca(2+) is bound by residues D198, D199, and E201. Residue H218 coordinates Zn(2+). E219 is an active-site residue. 2 residues coordinate Zn(2+): H222 and H228. The disordered stretch occupies residues 262 to 287; sequence LYGPPPDSPETPLVPTEPVPPEPGTP. Over residues 276–285 the composition is skewed to pro residues; it reads PTEPVPPEPG. Hemopexin repeat units lie at residues 287-336, 337-383, 385-433, and 434-477; these read PANC…WPSL, PSGV…GFPP, VRKI…FPGI, and DSKI…WLNC. A disulfide bond links C290 and C477. Residue D297 coordinates Ca(2+). Residues D389 and D438 each coordinate Ca(2+).

This sequence belongs to the peptidase M10A family. Ca(2+) is required as a cofactor. It depends on Zn(2+) as a cofactor. Directly cleaved by HTRA2 to produce active form.

The protein localises to the secreted. Its subcellular location is the extracellular space. It localises to the extracellular matrix. The protein resides in the nucleus. It is found in the cytoplasm. It catalyses the reaction Preferential cleavage where P1', P2' and P3' are hydrophobic residues.. Enzymatic activity is activated by HTRA2 in dopaminergic cells upon mitochondrial stress. Functionally, metalloproteinase with a rather broad substrate specificity that can degrade fibronectin, laminin, gelatins of type I, III, IV, and V; collagens III, IV, X, and IX, and cartilage proteoglycans. Activates different molecules including growth factors, plasminogen or other matrix metalloproteinases such as MMP9. Once released into the extracellular matrix (ECM), the inactive pro-enzyme is activated by the plasmin cascade signaling pathway. Also acts intracellularly. For example, in dopaminergic neurons, gets activated by the serine protease HTRA2 upon stress and plays a pivotal role in DA neuronal degeneration by mediating microglial activation and alpha-synuclein/SNCA cleavage. In addition, plays a role in immune response and possesses antiviral activity against various viruses such as vesicular stomatitis virus, influenza A virus (H1N1) and human herpes virus 1. Mechanistically, translocates from the cytoplasm into the cell nucleus upon virus infection to influence NF-kappa-B activities. The sequence is that of Stromelysin-1 (MMP3) from Homo sapiens (Human).